We begin with the raw amino-acid sequence, 100 residues long: UPF0213 protein YhbQ (100 aa).

The 76-residue stretch at 2–77 (TPWFLYLIRT…KQLTKRQKER (76 aa)) folds into the GIY-YIG domain.

Belongs to the UPF0213 family.

This Escherichia coli O157:H7 protein is UPF0213 protein YhbQ.